A 178-amino-acid chain; its full sequence is Transcription termination/antitermination protein NusG (178 aa).

The KOW domain occupies 126–156 (VGQQVRVNEGPFADFNGVVEEVNYERNKLRV).

This sequence belongs to the NusG family.

Participates in transcription elongation, termination and antitermination. This Neisseria meningitidis serogroup B (strain ATCC BAA-335 / MC58) protein is Transcription termination/antitermination protein NusG.